The chain runs to 382 residues: Porphobilinogen deaminase, chloroplastic (382 aa).

Residues 1-62 (MDIASSSLSQ…KQSSSGFVKA (62 aa)) constitute a chloroplast transit peptide. Residues arginine 80 and serine 82 each coordinate dipyrromethane. A Phosphoserine modification is found at serine 123. Dipyrromethane contacts are provided by residues 156–157 (KD), 200–206 (TASLRRK), and 223–229 (RGNVQTR). Aspartate 157 acts as the Proton donor/acceptor in catalysis. Residue cysteine 316 is modified to S-(dipyrrolylmethanemethyl)cysteine.

This sequence belongs to the HMBS family. Monomer. It depends on dipyrromethane as a cofactor.

The protein resides in the plastid. The protein localises to the chloroplast. The enzyme catalyses 4 porphobilinogen + H2O = hydroxymethylbilane + 4 NH4(+). It functions in the pathway porphyrin-containing compound metabolism; protoporphyrin-IX biosynthesis; coproporphyrinogen-III from 5-aminolevulinate: step 2/4. Its pathway is porphyrin-containing compound metabolism; chlorophyll biosynthesis. Its activity is regulated as follows. Inhibited by NH(3), heavy-metal ions, hydroxylamine and 2-bromoporphobilinogen. Not inhibited by N-ethylmaleimide. Its function is as follows. Tetrapolymerization of the monopyrrole PBG into the hydroxymethylbilane pre-uroporphyrinogen in several discrete steps. In Arabidopsis thaliana (Mouse-ear cress), this protein is Porphobilinogen deaminase, chloroplastic (HEMC).